Here is a 153-residue protein sequence, read N- to C-terminus: NADPH-dependent 7-cyano-7-deazaguanine reductase (153 aa).

The active-site Thioimide intermediate is Cys51. Catalysis depends on Asp58, which acts as the Proton donor. Substrate is bound by residues 73–75 (LES) and 92–93 (HE).

This sequence belongs to the GTP cyclohydrolase I family. QueF type 1 subfamily.

It localises to the cytoplasm. It catalyses the reaction 7-aminomethyl-7-carbaguanine + 2 NADP(+) = 7-cyano-7-deazaguanine + 2 NADPH + 3 H(+). Its pathway is tRNA modification; tRNA-queuosine biosynthesis. Its function is as follows. Catalyzes the NADPH-dependent reduction of 7-cyano-7-deazaguanine (preQ0) to 7-aminomethyl-7-deazaguanine (preQ1). The chain is NADPH-dependent 7-cyano-7-deazaguanine reductase from Bradyrhizobium diazoefficiens (strain JCM 10833 / BCRC 13528 / IAM 13628 / NBRC 14792 / USDA 110).